A 230-amino-acid chain; its full sequence is Thymidylate kinase (230 aa).

23–30 (GIDGAGKT) is an ATP binding site.

It belongs to the thymidylate kinase family.

It catalyses the reaction dTMP + ATP = dTDP + ADP. Phosphorylation of dTMP to form dTDP in both de novo and salvage pathways of dTTP synthesis. The protein is Thymidylate kinase of Ureaplasma parvum serovar 3 (strain ATCC 27815 / 27 / NCTC 11736).